We begin with the raw amino-acid sequence, 103 residues long: Small ribosomal subunit protein uS10 (103 aa).

It belongs to the universal ribosomal protein uS10 family. Part of the 30S ribosomal subunit.

Functionally, involved in the binding of tRNA to the ribosomes. This Bordetella parapertussis (strain 12822 / ATCC BAA-587 / NCTC 13253) protein is Small ribosomal subunit protein uS10.